The following is a 415-amino-acid chain: Serine/threonine transporter SstT (415 aa).

A run of 8 helical transmembrane segments spans residues 21 to 41 (ILLG…AALA), 45 to 65 (LGTL…LVLV), 85 to 105 (FLYL…SVLF), 142 to 162 (ALLN…GIAF), 193 to 213 (LGIF…ALWG), 217 to 237 (LLMV…PLIV), 289 to 309 (VAIP…ITVL), and 331 to 351 (VVAS…LLLI).

This sequence belongs to the dicarboxylate/amino acid:cation symporter (DAACS) (TC 2.A.23) family.

It is found in the cell inner membrane. The enzyme catalyses L-serine(in) + Na(+)(in) = L-serine(out) + Na(+)(out). It catalyses the reaction L-threonine(in) + Na(+)(in) = L-threonine(out) + Na(+)(out). Its function is as follows. Involved in the import of serine and threonine into the cell, with the concomitant import of sodium (symport system). The chain is Serine/threonine transporter SstT from Pectobacterium atrosepticum (strain SCRI 1043 / ATCC BAA-672) (Erwinia carotovora subsp. atroseptica).